Consider the following 463-residue polypeptide: uncharacterized protein (463 aa).

This is an uncharacterized protein from Ostreid herpesvirus 1 (isolate France) (OsHV-1).